The sequence spans 444 residues: Putative zinc metalloprotease XF_1047 (444 aa).

H22 provides a ligand contact to Zn(2+). Residue E23 is part of the active site. H26 serves as a coordination point for Zn(2+). Residues 98–120 (IAIVAAGPLANLLLCMLLLWVLF) form a helical membrane-spanning segment. In terms of domain architecture, PDZ spans 192-276 (TLELSKLKQP…DGHPGMIEIR (85 aa)). Transmembrane regions (helical) follow at residues 371 to 393 (VGWFIYFLSLLSLSLAIINLFPI) and 418 to 440 (AMAAGQYIGLALLAGLMGLAFYN).

Belongs to the peptidase M50B family. Zn(2+) is required as a cofactor.

The protein resides in the cell inner membrane. This is Putative zinc metalloprotease XF_1047 from Xylella fastidiosa (strain 9a5c).